A 257-amino-acid chain; its full sequence is Thioesterase frbE (257 aa).

The protein belongs to the AMT4 thioesterase family.

The protein operates within antifungal biosynthesis. Its function is as follows. Thioesterase; part of the gene cluster that mediates the biosynthesis of the antifungal antibiotic FR901469, an inhibitor of beta-1,3-glucansynthase, exerting antifungal activity against the pathogenes Candida albicans and Aspergillus fumigatus. FR901469 is a cyclic depsipeptide containing 12 amino acid residues and a fatty acid chain. The NRPS frbI contains 12 modules responsible for the formation of the depsipeptide backbone which is denoted as Acyl-Thr-Ala-Tyr-Val-4OHPro-Thr-Thr-3OHPro-threo3OHGln-Gly-Thr-Orn-OH (C71H116N14O23). The PKS frbB is probably involved in the production of the hydrocarbon chain, and the acyl-CoA ligase frbC might be involved in the transport of the chain to the peptide ptoduct of frbI. Because FR901469 contains 3 hydroxylated amino acid residues, the 3 oxygenases frbA, frbH, and frbJ might be participating in amino acid hydroxylation. As no thioesterase domains were detected in frbI or frbB, the thioesterases frbD and frbE may instead release and cyclize the products of the NRPS and PKS, respectively. The sequence is that of Thioesterase frbE from Dothideomycetidae sp. (strain 11243) (Fungal sp. (strain No.11243)).